The sequence spans 580 residues: Arginine--tRNA ligase (580 aa).

The 'HIGH' region motif lies at 131–141 (ANPTGPLHVGH).

This sequence belongs to the class-I aminoacyl-tRNA synthetase family. In terms of assembly, monomer.

Its subcellular location is the cytoplasm. It catalyses the reaction tRNA(Arg) + L-arginine + ATP = L-arginyl-tRNA(Arg) + AMP + diphosphate. This Ruegeria sp. (strain TM1040) (Silicibacter sp.) protein is Arginine--tRNA ligase.